A 518-amino-acid polypeptide reads, in one-letter code: MAIKAEEISALIKEQIENYQNVLSVEEIGTVTYVGDGIARAHGLENAMSGELLEFSNGSYGMAQNLESNDVGIIILGDFESIREGDKVKRTGKIMEVPVGDALIGRVVNPLGQPIDGLGEIVTDKVRPVEAMAPGVMQRKSVNEPMQTGLKAIDALVPIGRGQRELVIGDRKTGKTSIAIDTILNQKGQDMICIYVAIGQKDSTVRTQVETLKKYGAMDYTIVVNAGASQPAPLLYIAPYAGTAMGEEFMYNGKHVLIIFDDLSKQAVAYRELSLLLRRPPGREAYPGDVFYLHSRLLERAAKLSDDLGGGSMTALPFVETQAGDISAYIPTNVISITDGQIFLESDLFYAGTRPAVDAGLSVSRVGGSAQIKAMKKVAGTLRLDLASYRELEAFTQFGSDLDAATQAKLNRGRRTVEILKQKLHAPLAVEKQVVILYALTHGFLDSIPVDSILDFEHELFEYLDTNHADIFETIRTTKDLPEEERLNQAIQEYKDIFLATKGNTSSTEDKLKSIQNA.

169–176 (GDRKTGKT) provides a ligand contact to ATP.

Belongs to the ATPase alpha/beta chains family. In terms of assembly, F-type ATPases have 2 components, CF(1) - the catalytic core - and CF(0) - the membrane proton channel. CF(1) has five subunits: alpha(3), beta(3), gamma(1), delta(1), epsilon(1). CF(0) has three main subunits: a(1), b(2) and c(9-12). The alpha and beta chains form an alternating ring which encloses part of the gamma chain. CF(1) is attached to CF(0) by a central stalk formed by the gamma and epsilon chains, while a peripheral stalk is formed by the delta and b chains.

The protein resides in the cell membrane. It catalyses the reaction ATP + H2O + 4 H(+)(in) = ADP + phosphate + 5 H(+)(out). Functionally, produces ATP from ADP in the presence of a proton gradient across the membrane. The alpha chain is a regulatory subunit. The protein is ATP synthase subunit alpha of Enterococcus hirae (strain ATCC 9790 / DSM 20160 / JCM 8729 / LMG 6399 / NBRC 3181 / NCIMB 6459 / NCDO 1258 / NCTC 12367 / WDCM 00089 / R).